The primary structure comprises 1330 residues: Paired amphipathic helix protein Sin3-like 3 (1330 aa).

PAH domains are found at residues 8–78 and 94–164; these read QKLT…LPKG and KRVE…LPDT. Residues 191–246 are compositionally biased toward basic and acidic residues; sequence IITPHPDHDYGTEHIDQDRERPIKKENKEHMRGTNKENEHRDARDFEPHSKKEQFL. The disordered stretch occupies residues 191–281; the sequence is IITPHPDHDY…VPSSSTYDEK (91 aa). Positions 262–277 are enriched in polar residues; sequence ISNQSKLSGAVPSSST. The PAH 3 domain maps to 283 to 351; it reads AMKSYSQDLA…DSFIEFLVQC (69 aa). 5 disordered regions span residues 373–401, 718–775, 789–808, 882–906, and 920–1002; these read GEGK…DRDH, NQNV…GRTS, KNVV…SIER, QEMA…FEED, and SKAN…EAEC. A compositionally biased stretch (basic and acidic residues) spans 383–401; that stretch reads DNDRDQEHKRDDGLRDRDH. The segment covering 723–734 has biased composition (low complexity); it reads SGSSSAGESEGS. Residues 789 to 800 are compositionally biased toward basic and acidic residues; that stretch reads KNVVTSDEKPES. The span at 920–932 shows a compositional bias: polar residues; it reads SKANDSTGNNISG. Composition is skewed to basic and acidic residues over residues 933–949 and 956–968; these read DRSR…RAEN and NAAR…RNEY. Over residues 980-989 the composition is skewed to acidic residues; the sequence is GGEDPEDDLD. Position 996 is a phosphoserine (S996).

Interacts with ERF7 and the histone deacetylase HDA19.

Its subcellular location is the nucleus. In terms of biological role, acts as a transcriptional repressor. Interacts with ERF7 to repress genes in abscisic acid and drought stress responses. The heterodimer represses transcription by tethering SNL3 to DNA. This Arabidopsis thaliana (Mouse-ear cress) protein is Paired amphipathic helix protein Sin3-like 3 (SNL3).